We begin with the raw amino-acid sequence, 2169 residues long: MIRAFAQPSTPPYQPLSSCLSEDTERKFKGKVVHEAQLNCFYISPGGSNYGSPRPAHANMNANAAAGLAPEHIPTPGAALSWLAAIDAARQAKLMGSAGNATISTVSSTQRKRQQYGKPKKQGGTTATRPPRALLCLTLKNPIRRACISIVEWKPFEIIILLTIFANCVALAIYIPFPEDDSNATNSNLERVEYLFLIIFTVEAFLKVIAYGLLFHPNAYLRNGWNLLDFIIVVVGLFSAILEQATKADGANALGGKGAGFDVKALRAFRVLRPLRLVSGVPSLQVVLNSIIKAMVPLLHIALLVLFVIIIYAIIGLELFMGKMHKTCYNQEGIIDVPAEEDPSPCALETGHGRQCQNGTVCKPGWDGPKHGITNFDNFAFAMLTVFQCITMEGWTDVLYWMQDAMGYELPWVYFVSLVIFGSFFVLNLVLGVLSGEFSKEREKAKARGDFQKLREKQQLEEDLKGYLDWITQAEDIDPENEDEGMDEDKPRNMSMPTSETESVNTENVAGGDIEGENCGARLAHRISKSKFSRYWRRWNRFCRRKCRAAVKSNVFYWLVIFLVFLNTLTIASEHYNQPHWLTEVQDTANKALLALFTAEMLLKMYSLGLQAYFVSLFNRFDCFIVCGGILETILVETKIMSPLGISCWRCVRLLRIFKITRYWNSLSNLVASLLNSLRSIASLLLLLFLFIIIFSLLGMQLFGGKFNFDEMQTRRSTFDNFPQSLLTVFQILTGEDWNSVMYDGIMAYGGPSFPGMLVCIYFIILFISPNYILLNLFLAIAVDNLADAESLTSAQKEEEEEKERKKLARTASPEKKQEVMEKPAVEESKEEKIELKSITADGESPPTTKINMDDLQPSENEDKSPHSNPDTAGEEDEEEPEMPVGPRPRPLSELHLKEKAVPMPEASAFFIFSPNNRFRLQCHRIVNDTIFTNLILFFILLSSISLAAEDPVQHTSFRNHILFYFDIVFTTIFTIEIALKMTAYGAFLHKGSFCRNYFNILDLLVVSVSLISFGIQSSAINVVKILRVLRVLRPLRINRAKGLKHVVQCVFVAIRTIGNIVIVTTLLQFMFACIGVQLFKGKLYTCSDSSKQTEAESKGNYITYKTGEVDHPIIQPRSWENSKFDFDNVLAAMMALFTVSTFEGWPELLYRSIDSHTEDKGPIYNYRVEISIFFIIYIIIIAFFMMNIFVGFVIVTFQEQGEQEYKNCELDKNQRQCVEYALKARPLPRYIPKNQHQYKVWYVVNSTYFEYLMFVLILLNTICLAMQHYGQSCLFKIAMNILNMLFTGLFTVEMILKLIAFKPKHYFCDAWNTFDALIVVGSIVDIAITEVHPAEHTQCSPSMSAEENSRISITFFRLFRVMRLVKLLSRGEGIRTLLWTFIKSFQALPYVALLIVMLFFIYAVIGMQVFGKIALNDTTEINRNNNFQTFPQAVLLLFRCATGEAWQDIMLACMPGKKCAPESEPSNSTEGETPCGSSFAVFYFISFYMLCAFLIINLFVAVIMDNFDYLTRDWSILGPHHLDEFKRIWAEYDPEAKGRIKHLDVVTLLRRIQPPLGFGKLCPHRVACKRLVSMNMPLNSDGTVMFNATLFALVRTALRIKTEGNLEQANEELRAIIKKIWKRTSMKLLDQVVPPAGDDEVTVGKFYATFLIQEYFRKFKKRKEQGLVGKPSQRNALSLQAGLRTLHDIGPEIRRAISGDLTAEEELDKAMKEAVSAASEDDIFRRAGGLFGNHVSYYQSDSRSNFPQTFATQRPLHINKTGNNQADTESPSHEKLVDSTFTPSSYSSTGSNANINNANNTALGRFPHPAGYSSTVSTVEGHGPPLSPAVRVQEAAWKLSSKRCHSRESQGATVSQDMFPDETRSSVRLSEEVEYCSEPSLLSTDILSYQDDENRQLTCLEEDKREIQPCPKRSFLRSASLGRRASFHLECLKRQKDQGGDISQKTALPLHLVHHQALAVAGLSPLLQRSHSPSTFPRPRPTPPVTPGSRGRPLQPIPTLRLEGAESSEKLNSSFPSIHCSSWSEETTACSGGSSMARRARPVSLTVPSQAGAPGRQFHGSASSLVEAVLISEGLGQFAQDPKFIEVTTQELADACDMTIEEMENAADNILSGGAQQSPNGTLLPFVNCRDPGQDRAVVPEDESCVYALGRGRSEEALPDSRSYVSNL.

The Cytoplasmic segment spans residues 1-154; sequence MIRAFAQPST…RACISIVEWK (154 aa). A calmodulin-binding region spans residues 77 to 98; the sequence is GAALSWLAAIDAARQAKLMGSA. A disordered region spans residues 104 to 128; the sequence is STVSSTQRKRQQYGKPKKQGGTTAT. Residues 110–121 show a composition bias toward basic residues; sequence QRKRQQYGKPKK. Residues 141–438 form an I repeat; sequence NPIRRACISI…LVLGVLSGEF (298 aa). The helical transmembrane segment at 155–173 threads the bilayer; sequence PFEIIILLTIFANCVALAI. Over 174-188 the chain is Extracellular; it reads YIPFPEDDSNATNSN. Residue Asn183 is glycosylated (N-linked (GlcNAc...) asparagine). The helical transmembrane segment at 189–209 threads the bilayer; the sequence is LERVEYLFLIIFTVEAFLKVI. Topologically, residues 210–218 are cytoplasmic; sequence AYGLLFHPN. The helical transmembrane segment at 219 to 239 threads the bilayer; it reads AYLRNGWNLLDFIIVVVGLFS. At 240-262 the chain is on the extracellular side; it reads AILEQATKADGANALGGKGAGFD. The helical transmembrane segment at 263-281 threads the bilayer; the sequence is VKALRAFRVLRPLRLVSGV. The Cytoplasmic portion of the chain corresponds to 282–298; sequence PSLQVVLNSIIKAMVPL. A helical membrane pass occupies residues 299–320; the sequence is LHIALLVLFVIIIYAIIGLELF. At 321–380 the chain is on the extracellular side; it reads MGKMHKTCYNQEGIIDVPAEEDPSPCALETGHGRQCQNGTVCKPGWDGPKHGITNFDNFA. Intrachain disulfides connect Cys328–Cys356 and Cys346–Cys362. N-linked (GlcNAc...) asparagine glycosylation is present at Asn358. The pore-forming intramembrane region spans 381-402; it reads FAMLTVFQCITMEGWTDVLYWM. The Selectivity filter of repeat I motif lies at 391 to 394; the sequence is TMEG. Glu393 contributes to the Ca(2+) binding site. Residues 403-410 lie on the Extracellular side of the membrane; that stretch reads QDAMGYEL. The chain crosses the membrane as a helical span at residues 411 to 431; the sequence is PWVYFVSLVIFGSFFVLNLVL. At 432-554 the chain is on the cytoplasmic side; the sequence is GVLSGEFSKE…RKCRAAVKSN (123 aa). An AID/alpha-interaction domain; mediates interaction with the beta subunit region spans residues 458 to 475; sequence QQLEEDLKGYLDWITQAE. The tract at residues 479 to 511 is disordered; that stretch reads PENEDEGMDEDKPRNMSMPTSETESVNTENVAG. Residues 495–508 are compositionally biased toward polar residues; it reads SMPTSETESVNTEN. Ser499 carries the post-translational modification Phosphoserine. Phosphothreonine is present on Thr506. The stretch at 540-786 is one II repeat; it reads NRFCRRKCRA…LFLAIAVDNL (247 aa). The chain crosses the membrane as a helical span at residues 555 to 573; the sequence is VFYWLVIFLVFLNTLTIAS. The Extracellular portion of the chain corresponds to 574–584; it reads EHYNQPHWLTE. A helical membrane pass occupies residues 585 to 605; the sequence is VQDTANKALLALFTAEMLLKM. At 606 to 616 the chain is on the cytoplasmic side; it reads YSLGLQAYFVS. The helical transmembrane segment at 617 to 636 threads the bilayer; the sequence is LFNRFDCFIVCGGILETILV. The Extracellular portion of the chain corresponds to 637–645; sequence ETKIMSPLG. A helical membrane pass occupies residues 646–664; sequence ISCWRCVRLLRIFKITRYW. Topologically, residues 665–683 are cytoplasmic; it reads NSLSNLVASLLNSLRSIAS. The helical transmembrane segment at 684 to 703 threads the bilayer; sequence LLLLLFLFIIIFSLLGMQLF. The Extracellular segment spans residues 704–723; that stretch reads GGKFNFDEMQTRRSTFDNFP. The pore-forming intramembrane region spans 724–745; that stretch reads QSLLTVFQILTGEDWNSVMYDG. The short motif at 734–737 is the Selectivity filter of repeat II element; that stretch reads TGED. Ca(2+) is bound at residue Glu736. Residues 746 to 755 lie on the Extracellular side of the membrane; sequence IMAYGGPSFP. Residues 756 to 775 traverse the membrane as a helical segment; the sequence is GMLVCIYFIILFISPNYILL. The Cytoplasmic portion of the chain corresponds to 776–930; that stretch reads NLFLAIAVDN…LQCHRIVNDT (155 aa). The segment at 794–891 is disordered; sequence SAQKEEEEEK…EMPVGPRPRP (98 aa). A compositionally biased stretch (basic and acidic residues) spans 813–836; that stretch reads SPEKKQEVMEKPAVEESKEEKIEL. Residues Ser838 and Ser845 each carry the phosphoserine modification. The interaction with STAC2 stretch occupies residues 859–906; sequence SENEDKSPHSNPDTAGEEDEEEPEMPVGPRPRPLSELHLKEKAVPMPE. Residues 873–882 are compositionally biased toward acidic residues; it reads AGEEDEEEPE. The stretch at 917–1198 is one III repeat; that stretch reads NRFRLQCHRI…IFVGFVIVTF (282 aa). A helical membrane pass occupies residues 931–949; sequence IFTNLILFFILLSSISLAA. The Extracellular segment spans residues 950 to 961; that stretch reads EDPVQHTSFRNH. A helical membrane pass occupies residues 962–981; the sequence is ILFYFDIVFTTIFTIEIALK. At 982–997 the chain is on the cytoplasmic side; that stretch reads MTAYGAFLHKGSFCRN. Residues 998 to 1016 form a helical membrane-spanning segment; it reads YFNILDLLVVSVSLISFGI. Over 1017–1023 the chain is Extracellular; it reads QSSAINV. The chain crosses the membrane as a helical span at residues 1024-1041; that stretch reads VKILRVLRVLRPLRINRA. Residues 1042-1060 lie on the Cytoplasmic side of the membrane; the sequence is KGLKHVVQCVFVAIRTIGN. The chain crosses the membrane as a helical span at residues 1061 to 1080; it reads IVIVTTLLQFMFACIGVQLF. Topologically, residues 1081-1130 are extracellular; it reads KGKLYTCSDSSKQTEAESKGNYITYKTGEVDHPIIQPRSWENSKFDFDNV. The tract at residues 1118 to 1207 is dihydropyridine binding; the sequence is RSWENSKFDF…FQEQGEQEYK (90 aa). An intramembrane region (pore-forming) is located at residues 1131 to 1151; it reads LAAMMALFTVSTFEGWPELLY. The Selectivity filter of repeat III motif lies at 1142–1145; sequence TFEG. Position 1144 (Glu1144) interacts with Ca(2+). Topologically, residues 1152–1168 are extracellular; sequence RSIDSHTEDKGPIYNYR. The helical transmembrane segment at 1169-1190 threads the bilayer; sequence VEISIFFIIYIIIIAFFMMNIF. Over 1191-1248 the chain is Cytoplasmic; that stretch reads VGFVIVTFQEQGEQEYKNCELDKNQRQCVEYALKARPLPRYIPKNQHQYKVWYVVNST. One copy of the IV repeat lies at 1235–1508; the sequence is NQHQYKVWYV…LFVAVIMDNF (274 aa). The chain crosses the membrane as a helical span at residues 1249-1270; it reads YFEYLMFVLILLNTICLAMQHY. At 1271-1278 the chain is on the extracellular side; the sequence is GQSCLFKI. Residues 1279-1300 form a helical membrane-spanning segment; that stretch reads AMNILNMLFTGLFTVEMILKLI. Residues 1301–1310 lie on the Cytoplasmic side of the membrane; sequence AFKPKHYFCD. A helical membrane pass occupies residues 1311-1330; it reads AWNTFDALIVVGSIVDIAIT. Residues 1331–1353 lie on the Extracellular side of the membrane; that stretch reads EVHPAEHTQCSPSMSAEENSRIS. Residues 1354 to 1372 form a helical membrane-spanning segment; sequence ITFFRLFRVMRLVKLLSRG. Topologically, residues 1373-1390 are cytoplasmic; that stretch reads EGIRTLLWTFIKSFQALP. Residues 1391–1411 traverse the membrane as a helical segment; the sequence is YVALLIVMLFFIYAVIGMQVF. Topologically, residues 1412 to 1433 are extracellular; that stretch reads GKIALNDTTEINRNNNFQTFPQ. Asn1417 carries an N-linked (GlcNAc...) asparagine glycan. The pore-forming intramembrane region spans 1434–1452; sequence AVLLLFRCATGEAWQDIML. A Selectivity filter of repeat IV motif is present at residues 1443 to 1446; the sequence is TGEA. Topologically, residues 1453–1480 are extracellular; it reads ACMPGKKCAPESEPSNSTEGETPCGSSF. Positions 1459-1527 are dihydropyridine binding; sequence KCAPESEPSN…LGPHHLDEFK (69 aa). An intrachain disulfide couples Cys1460 to Cys1476. Asn1468 carries N-linked (GlcNAc...) asparagine glycosylation. The tract at residues 1473 to 1515 is phenylalkylamine binding; the sequence is ETPCGSSFAVFYFISFYMLCAFLIINLFVAVIMDNFDYLTRDW. A helical transmembrane segment spans residues 1481-1505; it reads AVFYFISFYMLCAFLIINLFVAVIM. Residues 1506 to 2169 lie on the Cytoplasmic side of the membrane; it reads DNFDYLTRDW…PDSRSYVSNL (664 aa). The important for interaction with STAC1, STAC2 and STAC3 stretch occupies residues 1640–1667; that stretch reads DEVTVGKFYATFLIQEYFRKFKKRKEQG. Positions 1640-1673 are calmodulin-binding; sequence DEVTVGKFYATFLIQEYFRKFKKRKEQGLVGKPS. Residues 1646–1666 are calmodulin-binding IQ region; it reads KFYATFLIQEYFRKFKKRKEQ. Residues 1680 to 1699 form an important for localization in at the junctional membrane region; the sequence is LQAGLRTLHDIGPEIRRAIS. A phosphoserine mark is found at Ser1699 and Ser1720. Composition is skewed to polar residues over residues 1761–1770 and 1780–1792; these read KTGNNQADTE and STFTPSSYSSTGS. The tract at residues 1761–1793 is disordered; that stretch reads KTGNNQADTESPSHEKLVDSTFTPSSYSSTGSN. Ser1927 carries the post-translational modification Phosphoserine; by PKA. The segment at 1970–1998 is disordered; the sequence is RSHSPSTFPRPRPTPPVTPGSRGRPLQPI. Residues 1977-1987 are compositionally biased toward pro residues; the sequence is FPRPRPTPPVT.

It belongs to the calcium channel alpha-1 subunit (TC 1.A.1.11) family. CACNA1C subfamily. As to quaternary structure, component of a calcium channel complex consisting of a pore-forming alpha subunit (CACNA1C) and ancillary beta, gamma and delta subunits. The channel complex contains alpha, beta, gamma and delta subunits in a 1:1:1:1 ratio, i.e. it contains only one of each type of subunit. CACNA1C channel activity is modulated by ancillary subunits, such as CACNB1, CACNB2, CACNB3, CACNA2D1 and CACNA2D4. Interacts with the gamma subunits CACNG4, CACNG6, CACNG7 and CACNG8. Interacts with CACNB1. Interacts with CACNB2. Identified in a complex with CACNA2D4 and CACNB3. Interacts with CACNB3. Interacts with CACNA2D1. Interacts with CACNA2D4. Interacts with CALM1. Interacts (via the N-terminus and the C-terminal C and IQ motifs) with CABP1; this inhibits Ca(2+)-dependent channel inactivation. The binding via the C motif is calcium independent whereas the binding via IQ requires the presence of calcium and is mutually exclusive with calmodulin binding. The binding to the cytoplasmic N-terminal domain is calcium independent but is essential for the channel modulation. Interacts (via C-terminal CDB motif) with CABP5; in a calcium-dependent manner. Interacts with CIB1; the interaction increases upon cardiomyocytes hypertrophy. Interacts with STAC2 and STAC3; this inhibits channel inactivation. In terms of processing, phosphorylation by PKA at Ser-1927 activates the channel. Elevated levels of blood glucose lead to increased phosphorylation by PKA. Is also phosphorylated in vitro by CaM-kinase II, PKC and CGPK. Detected in hippocampus and brain cortex, on neuronal cell bodies and dendrites, and in post-synaptic density in brain (at protein level). Isoforms 4 and 5 are expressed throughout the central nervous system, with highest levels in the olfactory bulb and cerebellum. Also expressed in heart, pituitary, adrenal gland, liver, kidney, and in a much lesser extent in testes and spleen.

The protein resides in the cell membrane. It is found in the sarcolemma. Its subcellular location is the perikaryon. The protein localises to the postsynaptic density membrane. It localises to the cell projection. The protein resides in the dendrite. It is found in the T-tubule. The enzyme catalyses Ca(2+)(in) = Ca(2+)(out). Its activity is regulated as follows. Inhibited by dihydropyridines (DHP), such as isradipine. Inhibited by nifedipine. Channel activity is regulated by Ca(2+) and calmodulin. Binding of STAC1, STAC2 or STAC3 to a region that overlaps with the calmodulin binding site inhibits channel inactivation by Ca(2+) and calmodulin. Binding of calmodulin or CABP1 at the same regulatory sites results in opposite effects on the channel function. Shear stress and pressure increases calcium channel activity. Functionally, pore-forming, alpha-1C subunit of the voltage-gated calcium channel that gives rise to L-type calcium currents. Mediates influx of calcium ions into the cytoplasm, and thereby triggers calcium release from the sarcoplasm. Plays an important role in excitation-contraction coupling in the heart. Required for normal heart development and normal regulation of heart rhythm. Required for normal contraction of smooth muscle cells in blood vessels and in the intestine. Essential for normal blood pressure regulation via its role in the contraction of arterial smooth muscle cells. Long-lasting (L-type) calcium channels belong to the 'high-voltage activated' (HVA) group. The protein is Voltage-dependent L-type calcium channel subunit alpha-1C (Cacna1c) of Rattus norvegicus (Rat).